A 616-amino-acid chain; its full sequence is UPF0329 protein ECU02_1540 (616 aa).

Basic and acidic residues-rich tracts occupy residues 350-359 (EREKREESKG) and 369-381 (GAGE…KEED). The disordered stretch occupies residues 350–427 (EREKREESKG…RKGDGHHYKI (78 aa)). Residues 382-396 (GKEEEGVEAEEEESA) are compositionally biased toward acidic residues. Basic residues predominate over residues 408 to 427 (ARRKKSLKGKRKGDGHHYKI).

It belongs to the UPF0329 family.

The polypeptide is UPF0329 protein ECU02_1540 (Encephalitozoon cuniculi (strain GB-M1) (Microsporidian parasite)).